Here is a 285-residue protein sequence, read N- to C-terminus: 2-dehydro-3-deoxyphosphooctonate aldolase (285 aa).

The protein belongs to the KdsA family.

Its subcellular location is the cytoplasm. The enzyme catalyses D-arabinose 5-phosphate + phosphoenolpyruvate + H2O = 3-deoxy-alpha-D-manno-2-octulosonate-8-phosphate + phosphate. It functions in the pathway carbohydrate biosynthesis; 3-deoxy-D-manno-octulosonate biosynthesis; 3-deoxy-D-manno-octulosonate from D-ribulose 5-phosphate: step 2/3. Its pathway is bacterial outer membrane biogenesis; lipopolysaccharide biosynthesis. The protein is 2-dehydro-3-deoxyphosphooctonate aldolase of Acinetobacter baumannii (strain AB307-0294).